A 503-amino-acid chain; its full sequence is EZH inhibitory protein (503 aa).

Over residues 1 to 16 (MATQSDMEKEQKHQQD) the composition is skewed to basic and acidic residues. Disordered stretches follow at residues 1 to 72 (MATQ…AAAA), 97 to 462 (HSDR…RSIS), and 483 to 503 (VPPE…PPEP). Over residues 41 to 72 (PAASVTTVSSQASPSGGAALSSSTAGSSAAAA) the composition is skewed to low complexity. Residues 97–107 (HSDRQDCRSPH) show a composition bias toward basic and acidic residues. Polar residues predominate over residues 184-197 (YPCSGASTSSQATQ). A Phosphoserine modification is found at Ser-259. Over residues 345–366 (LRSRSTQQRSALLSRRSLSGSA) the composition is skewed to low complexity. The tract at residues 401-409 (WHAVRMRAS) is sufficient for interaction with EZH2. Positions 403 to 423 (AVRMRASSPSPPGRFFLPIPQ) are necessary and sufficient for inhibition of PRC2/EED-EZH1 and PRC2/EED-EZH2 complex activity. Residues 428–453 (SSSSSYASNSSSPSRSPGLSPSSPSP) are compositionally biased toward low complexity.

As to quaternary structure, interacts with PRC2/EED-EZH1 complex member EZH1 and with PRC2/EED-EZH2 complex member EZH2; the interaction blocks EZH1/EZH2 methyltransferase activity. Interacts (via C-terminus) with SUZ12 which is a member of the PRC2/EED-EZH1 and PRC2/EED-EZH2 complexes. In testis, detected in male germ cells inside the seminiferous tubules, especially in spermatogonia and round spermatids (at protein level). In the ovary, expressed in primordial follicles and oocytes but not the external follicle cells (at protein level).

Its subcellular location is the nucleus. It localises to the cytoplasm. Its function is as follows. Inhibits PRC2/EED-EZH1 and PRC2/EED-EZH2 complex function by inhibiting EZH1/EZH2 methyltransferase activity, thereby causing down-regulation of histone H3 trimethylation on 'Lys-27' (H3K27me3). Probably inhibits methyltransferase activity by limiting the stimulatory effect of cofactors such as AEBP2 and JARID2. Inhibits H3K27me3 deposition during spermatogenesis and oogenesis. This chain is EZH inhibitory protein, found in Homo sapiens (Human).